We begin with the raw amino-acid sequence, 142 residues long: Domesticated amidase effector 2 (142 aa).

Residues 1–35 form the signal peptide; the sequence is MKLFLISAALVVLGLAAVADAIGCSDPSPFQGRWV. Residues Cys-43 and His-94 contribute to the active site.

This sequence belongs to the cell wall amidase Dae2/Tae2-like family. Post-translationally, may be post-translationally modified, since the saliva wild-type protein is slightly heavier than the recombinant one. In terms of tissue distribution, detected in salivary glands and in the gut (at protein level).

It is found in the secreted. Functionally, tick gut and saliva antibacterial peptide that directly antagonizes host skin commensals which enter the ticks during feeding. Acts as a cell wall hydrolase that cleaves the bond between gamma-D-glutamate-meso-diaminopimelate of a peptide stem and D-alanine of another peptide stem in peptidoglycans. In vitro, degrades peptidoglycans from both Gram-negative and Gram-positive bacteria. Is not able to traverse the protective outer membrane of Gram-negative bacteria. Is not able to kill Borrelia burgdorferi, one of the Lyme disease-causing bacteria. The polypeptide is Domesticated amidase effector 2 (Ixodes scapularis (Black-legged tick)).